A 155-amino-acid polypeptide reads, in one-letter code: Small ribosomal subunit protein uS7c (155 aa).

The protein belongs to the universal ribosomal protein uS7 family. In terms of assembly, part of the 30S ribosomal subunit.

The protein localises to the plastid. The protein resides in the chloroplast. Functionally, one of the primary rRNA binding proteins, it binds directly to 16S rRNA where it nucleates assembly of the head domain of the 30S subunit. This Houttuynia cordata (Chameleon plant) protein is Small ribosomal subunit protein uS7c (rps7).